We begin with the raw amino-acid sequence, 156 residues long: ATP synthase subunit b (156 aa).

A helical transmembrane segment spans residues 12–32 (VAFLIFVLFCMKFVWPPVIAA).

This sequence belongs to the ATPase B chain family. As to quaternary structure, F-type ATPases have 2 components, F(1) - the catalytic core - and F(0) - the membrane proton channel. F(1) has five subunits: alpha(3), beta(3), gamma(1), delta(1), epsilon(1). F(0) has three main subunits: a(1), b(2) and c(10-14). The alpha and beta chains form an alternating ring which encloses part of the gamma chain. F(1) is attached to F(0) by a central stalk formed by the gamma and epsilon chains, while a peripheral stalk is formed by the delta and b chains.

The protein resides in the cell inner membrane. Its function is as follows. F(1)F(0) ATP synthase produces ATP from ADP in the presence of a proton or sodium gradient. F-type ATPases consist of two structural domains, F(1) containing the extramembraneous catalytic core and F(0) containing the membrane proton channel, linked together by a central stalk and a peripheral stalk. During catalysis, ATP synthesis in the catalytic domain of F(1) is coupled via a rotary mechanism of the central stalk subunits to proton translocation. In terms of biological role, component of the F(0) channel, it forms part of the peripheral stalk, linking F(1) to F(0). This chain is ATP synthase subunit b, found in Pseudomonas fluorescens (strain Pf0-1).